The chain runs to 330 residues: Glycerol-3-phosphate dehydrogenase [NAD(P)+] (330 aa).

NADPH is bound by residues tryptophan 11, arginine 33, and lysine 105. The sn-glycerol 3-phosphate site is built by lysine 105, glycine 133, and serine 135. Alanine 137 contributes to the NADPH binding site. Residues lysine 188, aspartate 241, serine 251, arginine 252, and asparagine 253 each contribute to the sn-glycerol 3-phosphate site. The Proton acceptor role is filled by lysine 188. Position 252 (arginine 252) interacts with NADPH. Residues valine 276 and glutamate 278 each contribute to the NADPH site.

This sequence belongs to the NAD-dependent glycerol-3-phosphate dehydrogenase family.

The protein resides in the cytoplasm. The catalysed reaction is sn-glycerol 3-phosphate + NAD(+) = dihydroxyacetone phosphate + NADH + H(+). The enzyme catalyses sn-glycerol 3-phosphate + NADP(+) = dihydroxyacetone phosphate + NADPH + H(+). It functions in the pathway membrane lipid metabolism; glycerophospholipid metabolism. Functionally, catalyzes the reduction of the glycolytic intermediate dihydroxyacetone phosphate (DHAP) to sn-glycerol 3-phosphate (G3P), the key precursor for phospholipid synthesis. In Acidovorax ebreus (strain TPSY) (Diaphorobacter sp. (strain TPSY)), this protein is Glycerol-3-phosphate dehydrogenase [NAD(P)+].